A 424-amino-acid chain; its full sequence is Adenylosuccinate synthetase (424 aa).

GTP contacts are provided by residues 12–18 (GDEGKGK) and 40–42 (GHT). Catalysis depends on aspartate 13, which acts as the Proton acceptor. Mg(2+)-binding residues include aspartate 13 and glycine 40. Residues 13–16 (DEGK), 38–41 (NAGH), threonine 130, arginine 144, asparagine 220, threonine 235, and arginine 299 contribute to the IMP site. Histidine 41 acts as the Proton donor in catalysis. Substrate is bound at residue 295–301 (VTTGRRR). GTP-binding positions include arginine 301, 327–329 (KLD), and 412–414 (GTG).

Belongs to the adenylosuccinate synthetase family. As to quaternary structure, homodimer. It depends on Mg(2+) as a cofactor.

The protein resides in the cytoplasm. It carries out the reaction IMP + L-aspartate + GTP = N(6)-(1,2-dicarboxyethyl)-AMP + GDP + phosphate + 2 H(+). It participates in purine metabolism; AMP biosynthesis via de novo pathway; AMP from IMP: step 1/2. Its function is as follows. Plays an important role in the de novo pathway and in the salvage pathway of purine nucleotide biosynthesis. Catalyzes the first committed step in the biosynthesis of AMP from IMP. This chain is Adenylosuccinate synthetase, found in Aspergillus flavus (strain ATCC 200026 / FGSC A1120 / IAM 13836 / NRRL 3357 / JCM 12722 / SRRC 167).